We begin with the raw amino-acid sequence, 136 residues long: Large ribosomal subunit protein uL16 (136 aa).

Belongs to the universal ribosomal protein uL16 family. In terms of assembly, part of the 50S ribosomal subunit.

Its function is as follows. Binds 23S rRNA and is also seen to make contacts with the A and possibly P site tRNAs. The polypeptide is Large ribosomal subunit protein uL16 (Rickettsia canadensis (strain McKiel)).